Reading from the N-terminus, the 117-residue chain is Immunoglobulin heavy variable 1-84 (117 aa).

The signal sequence occupies residues 1–19 (MGWSWIFLFLLSGTAGVHC). A framework-1 region spans residues 20–49 (QIQLQQSGPELVKPGASVKISCKASGYTFT). An Ig-like domain is found at 31 to 117 (VKPGASVKIS…EDSAVYFCAR (87 aa)). Residues cysteine 41 and cysteine 115 are joined by a disulfide bond. The segment at 50 to 54 (DYYIN) is complementarity-determining-1. The framework-2 stretch occupies residues 55–68 (WVKQRPGQGLEWIG). The interval 69 to 85 (WIYPGSGNTKYNEKFKG) is complementarity-determining-2. The tract at residues 86–117 (KATLTVDTSSSTAYMQLSSLTSEDSAVYFCAR) is framework-3.

The chain is Immunoglobulin heavy variable 1-84 from Mus musculus (Mouse).